Here is a 311-residue protein sequence, read N- to C-terminus: Putative RNA-binding protein R05D3.8 (311 aa).

Residues Lys155 to Lys235 enclose the RRM domain. The span at Thr261–His270 shows a compositional bias: polar residues. Residues Thr261–Trp311 form a disordered region.

In Caenorhabditis elegans, this protein is Putative RNA-binding protein R05D3.8.